We begin with the raw amino-acid sequence, 2017 residues long: Rootletin (2017 aa).

Coiled-coil stretches lie at residues Ala-70 to Asn-262 and Glu-318 to Glu-444. The segment covering Ser-464–Ser-483 has biased composition (polar residues). The tract at residues Ser-464–Ser-518 is disordered. Over residues Ser-499–Pro-513 the composition is skewed to low complexity. Coiled-coil stretches lie at residues Gln-546–Ser-1058 and Glu-1091–Ser-1438. Disordered regions lie at residues Leu-1184–Val-1226 and Gly-1443–Ser-1575. Phosphoserine is present on residues Ser-1460, Ser-1470, Ser-1476, Ser-1483, Ser-1486, Ser-1490, and Ser-1496. The stretch at Glu-1505–Gln-1704 forms a coiled coil. The segment covering Ala-1510–Arg-1529 has biased composition (basic and acidic residues). Phosphoserine occurs at positions 1575 and 1660. The tract at residues Arg-1962–Lys-2017 is disordered. Residues Gln-1989 to Gln-1999 show a composition bias toward polar residues. Residues Phe-2008 to Lys-2017 are compositionally biased toward pro residues.

This sequence belongs to the rootletin family. As to quaternary structure, homomer. Interacts with KLC3, NEK2 and the N-terminus of CEP250. Interacts with CEP44. Interacts with CCDC102B (via N-terminus). Post-translationally, phosphorylated by NEK2 which may regulate its association with centrosomes.

Its subcellular location is the cytoplasm. It is found in the cytoskeleton. The protein localises to the microtubule organizing center. The protein resides in the centrosome. It localises to the centriole. Its subcellular location is the cilium basal body. In terms of biological role, major structural component of the ciliary rootlet, a cytoskeletal-like structure in ciliated cells which originates from the basal body at the proximal end of a cilium and extends proximally toward the cell nucleus. Furthermore, is required for the correct positioning of the cilium basal body relative to the cell nucleus, to allow for ciliogenesis. Contributes to centrosome cohesion before mitosis. The chain is Rootletin from Homo sapiens (Human).